Consider the following 207-residue polypeptide: Small ribosomal subunit protein uS4c (207 aa).

Residues 22 to 51 (TQKNCTRDFPPGQHGPKKKGGGNQKTKESQ) are disordered. An S4 RNA-binding domain is found at 97-158 (MRLDTIIFRL…NSQNFVKNLL (62 aa)).

This sequence belongs to the universal ribosomal protein uS4 family. In terms of assembly, part of the 30S ribosomal subunit. Contacts protein S5. The interaction surface between S4 and S5 is involved in control of translational fidelity.

It localises to the plastid. The protein resides in the chloroplast. In terms of biological role, one of the primary rRNA binding proteins, it binds directly to 16S rRNA where it nucleates assembly of the body of the 30S subunit. Its function is as follows. With S5 and S12 plays an important role in translational accuracy. The sequence is that of Small ribosomal subunit protein uS4c (rps4) from Chlorella vulgaris (Green alga).